We begin with the raw amino-acid sequence, 509 residues long: Sperm-associated antigen 6 (509 aa).

ARM repeat units lie at residues 31–70 (PQNIETLQNAGVMSLLRTLLLDVVPTIQQTAALALGRLAN), 73–112 (DDLAEAVVKCDILPQLVYSLAEQNRFYKKAAAFVLRAVGK), 115–154 (PQLAQAIVDCGALDTLVICLEDFDPGVKEAAAWALRYIAR), 157–196 (AELSQAVVDAGAVPLLVLCIQEPEIALKRIAASALSDIAK), 199–238 (PELAQTVVDAGAVAHLAQMILNPDAKLKHQILSALSQVSK), 241–280 (VDLAEMVVEAEIFPVVLTCLKDKDEYVKKNASTLIREIAK), 325–365 (ENLA…QIGR), and 368–409 (PEHA…NILQ).

As to quaternary structure, interacts with SPAG16 and SPAG17. As to expression, highly expressed in testis.

It is found in the cytoplasm. The protein localises to the cytoskeleton. It localises to the cell projection. The protein resides in the cilium. Its subcellular location is the flagellum. It is found in the cilium axoneme. Its function is as follows. Important for structural integrity of the central apparatus in the sperm tail and for flagellar motility. The protein is Sperm-associated antigen 6 (SPAG6) of Homo sapiens (Human).